The sequence spans 278 residues: 4-diphosphocytidyl-2-C-methyl-D-erythritol kinase (278 aa).

K9 is an active-site residue. Position 93 to 103 (93 to 103) interacts with ATP; the sequence is PLGGGLGGGSS. D135 is an active-site residue.

This sequence belongs to the GHMP kinase family. IspE subfamily.

The enzyme catalyses 4-CDP-2-C-methyl-D-erythritol + ATP = 4-CDP-2-C-methyl-D-erythritol 2-phosphate + ADP + H(+). It functions in the pathway isoprenoid biosynthesis; isopentenyl diphosphate biosynthesis via DXP pathway; isopentenyl diphosphate from 1-deoxy-D-xylulose 5-phosphate: step 3/6. Functionally, catalyzes the phosphorylation of the position 2 hydroxy group of 4-diphosphocytidyl-2C-methyl-D-erythritol. This is 4-diphosphocytidyl-2-C-methyl-D-erythritol kinase from Nitrosomonas europaea (strain ATCC 19718 / CIP 103999 / KCTC 2705 / NBRC 14298).